The sequence spans 455 residues: MSLEIVILAAGQGTRMRSALPKVLHPIAGDSMLGHVIHSARQLDPQRIHVVIGHGADVVRERLAADDLNFVLQDKQLGTGHATAQAVPFITADTVLILYGDVPLIEVETLQRLLKHVVPGQMGLLTVELDDPTGYGRIVRDADGKVAAIVEHKDASEAQRAITEGNTGILAVPANRLADWMSRLSNNNAQGEYYLTDVIEMAVSDGLTVATEQPHDPMEVQGANDRKQLSELERHYQLRAGRRLMAQGVTLRDPARFDVRGEVTVGRDVLIDINVILEGKVVIEDDVVIGPNCVIKDSTLRKGVVIKANSHIEGAVLGEGSDAGPFARLRPGTVLEARAHVGNFVELKNARMGEGAKAGHLTYLGDAEIGARTNIGAGTITCNYDGANKWKTVLGEDVFIGSNNSLVAPVDISAGATTAAGSTITQNVENSQLAVGRARQKNIDGWKRPEKIKKN.

Residues 1-226 (MSLEIVILAA…PMEVQGANDR (226 aa)) form a pyrophosphorylase region. UDP-N-acetyl-alpha-D-glucosamine is bound by residues 8-11 (LAAG), lysine 22, glutamine 73, 78-79 (GT), 99-101 (YGD), glycine 136, glutamate 151, asparagine 166, and asparagine 224. Aspartate 101 contributes to the Mg(2+) binding site. Asparagine 224 contacts Mg(2+). Positions 227-247 (KQLSELERHYQLRAGRRLMAQ) are linker. Positions 248 to 455 (GVTLRDPARF…WKRPEKIKKN (208 aa)) are N-acetyltransferase. UDP-N-acetyl-alpha-D-glucosamine contacts are provided by arginine 330 and lysine 348. Histidine 360 acts as the Proton acceptor in catalysis. Residues tyrosine 363 and asparagine 374 each coordinate UDP-N-acetyl-alpha-D-glucosamine. Acetyl-CoA is bound by residues alanine 377, 383–384 (NY), serine 402, alanine 420, and arginine 437.

In the N-terminal section; belongs to the N-acetylglucosamine-1-phosphate uridyltransferase family. This sequence in the C-terminal section; belongs to the transferase hexapeptide repeat family. In terms of assembly, homotrimer. It depends on Mg(2+) as a cofactor.

It localises to the cytoplasm. It catalyses the reaction alpha-D-glucosamine 1-phosphate + acetyl-CoA = N-acetyl-alpha-D-glucosamine 1-phosphate + CoA + H(+). The catalysed reaction is N-acetyl-alpha-D-glucosamine 1-phosphate + UTP + H(+) = UDP-N-acetyl-alpha-D-glucosamine + diphosphate. It functions in the pathway nucleotide-sugar biosynthesis; UDP-N-acetyl-alpha-D-glucosamine biosynthesis; N-acetyl-alpha-D-glucosamine 1-phosphate from alpha-D-glucosamine 6-phosphate (route II): step 2/2. The protein operates within nucleotide-sugar biosynthesis; UDP-N-acetyl-alpha-D-glucosamine biosynthesis; UDP-N-acetyl-alpha-D-glucosamine from N-acetyl-alpha-D-glucosamine 1-phosphate: step 1/1. It participates in bacterial outer membrane biogenesis; LPS lipid A biosynthesis. Functionally, catalyzes the last two sequential reactions in the de novo biosynthetic pathway for UDP-N-acetylglucosamine (UDP-GlcNAc). The C-terminal domain catalyzes the transfer of acetyl group from acetyl coenzyme A to glucosamine-1-phosphate (GlcN-1-P) to produce N-acetylglucosamine-1-phosphate (GlcNAc-1-P), which is converted into UDP-GlcNAc by the transfer of uridine 5-monophosphate (from uridine 5-triphosphate), a reaction catalyzed by the N-terminal domain. In Pseudomonas fluorescens (strain Pf0-1), this protein is Bifunctional protein GlmU.